The primary structure comprises 150 residues: Soluble pyridine nucleotide transhydrogenase (150 aa).

This sequence belongs to the class-I pyridine nucleotide-disulfide oxidoreductase family. FAD serves as cofactor.

The protein resides in the cytoplasm. The enzyme catalyses NAD(+) + NADPH = NADH + NADP(+). In terms of biological role, conversion of NADPH, generated by peripheral catabolic pathways, to NADH, which can enter the respiratory chain for energy generation. This chain is Soluble pyridine nucleotide transhydrogenase (sthA), found in Pectobacterium carotovorum subsp. carotovorum (Erwinia carotovora subsp. carotovora).